Consider the following 383-residue polypeptide: tRNA(Met) cytidine acetate ligase (383 aa).

ATP contacts are provided by residues 7-20, G101, N153, and 178-179; these read IAEFNPLHSGHEFL and RI.

The protein belongs to the TmcAL family.

It localises to the cytoplasm. The enzyme catalyses cytidine(34) in elongator tRNA(Met) + acetate + ATP = N(4)-acetylcytidine(34) in elongator tRNA(Met) + AMP + diphosphate. Its function is as follows. Catalyzes the formation of N(4)-acetylcytidine (ac(4)C) at the wobble position of elongator tRNA(Met), using acetate and ATP as substrates. First activates an acetate ion to form acetyladenylate (Ac-AMP) and then transfers the acetyl group to tRNA to form ac(4)C34. This chain is tRNA(Met) cytidine acetate ligase, found in Lactobacillus acidophilus (strain ATCC 700396 / NCK56 / N2 / NCFM).